Consider the following 360-residue polypeptide: Phosphate acyltransferase (360 aa).

The segment covering 296–305 (STLRREHLDR) has biased composition (basic and acidic residues). A disordered region spans residues 296–360 (STLRREHLDR…LRTAEPPGSL (65 aa)). The segment covering 314-333 (PRQRRRPRRQKRRAACRPRP) has biased composition (basic residues). Over residues 334 to 350 (RSAAGRAPGSGVRGAAG) the composition is skewed to low complexity.

Belongs to the PlsX family. In terms of assembly, homodimer. Probably interacts with PlsY.

Its subcellular location is the cytoplasm. It catalyses the reaction a fatty acyl-[ACP] + phosphate = an acyl phosphate + holo-[ACP]. It functions in the pathway lipid metabolism; phospholipid metabolism. Its function is as follows. Catalyzes the reversible formation of acyl-phosphate (acyl-PO(4)) from acyl-[acyl-carrier-protein] (acyl-ACP). This enzyme utilizes acyl-ACP as fatty acyl donor, but not acyl-CoA. The chain is Phosphate acyltransferase from Deinococcus radiodurans (strain ATCC 13939 / DSM 20539 / JCM 16871 / CCUG 27074 / LMG 4051 / NBRC 15346 / NCIMB 9279 / VKM B-1422 / R1).